Reading from the N-terminus, the 452-residue chain is Retrograde protein of 51 kDa (452 aa).

Positions 1-13 (MQKGAKIEDEGRQ) are enriched in basic and acidic residues. The segment at 1-50 (MQKGAKIEDEGRQSRIQSRNFIIQRSDPRTRGSSVYSSRSSSYNVRSSIS) is disordered. The tract at residues 1 to 75 (MQKGAKIEDE…KGNREKEKRE (75 aa)) is head. A compositionally biased stretch (polar residues) spans 14–23 (SRIQSRNFII). The segment covering 33 to 50 (SSVYSSRSSSYNVRSSIS) has biased composition (low complexity). Residues 72–424 (EKREMQNLNE…KLLEGEESRV (353 aa)) form the IF rod domain. The segment at 76-111 (MQNLNERLASYIEKVHFLDAQVKKLEAENEALRNRK) is coil 1A. The tract at residues 112–121 (VEDLQPIRDA) is linker 1. The interval 122–259 (YENELRQARK…DLLDQLELLK (138 aa)) is coil 1B. Residue Ser-156 is modified to Sulfoserine. Positions 260 to 278 (PEPIQIKGMDYADFWKSEL) are linker 12. Positions 279 to 424 (AKCVREINLA…KLLEGEESRV (146 aa)) are coil 2. Residues 425–452 (GLRTLVEQAIGTQSKGSASLKDAIQSSS) are tail.

The protein belongs to the intermediate filament family.

The sequence is that of Retrograde protein of 51 kDa (RGP51) from Lymnaea stagnalis (Great pond snail).